The primary structure comprises 665 residues: tRNA 5-methylaminomethyl-2-thiouridine biosynthesis bifunctional protein MnmC (665 aa).

The segment at 1–243 (MSQTSLHHAR…KWAMLAGERV (243 aa)) is tRNA (mnm(5)s(2)U34)-methyltransferase. Residues 268–665 (IGGGIASAMT…RKLLKGKPLN (398 aa)) are FAD-dependent cmnm(5)s(2)U34 oxidoreductase.

The protein in the N-terminal section; belongs to the methyltransferase superfamily. tRNA (mnm(5)s(2)U34)-methyltransferase family. It in the C-terminal section; belongs to the DAO family. Requires FAD as cofactor.

The protein localises to the cytoplasm. It carries out the reaction 5-aminomethyl-2-thiouridine(34) in tRNA + S-adenosyl-L-methionine = 5-methylaminomethyl-2-thiouridine(34) in tRNA + S-adenosyl-L-homocysteine + H(+). Functionally, catalyzes the last two steps in the biosynthesis of 5-methylaminomethyl-2-thiouridine (mnm(5)s(2)U) at the wobble position (U34) in tRNA. Catalyzes the FAD-dependent demodification of cmnm(5)s(2)U34 to nm(5)s(2)U34, followed by the transfer of a methyl group from S-adenosyl-L-methionine to nm(5)s(2)U34, to form mnm(5)s(2)U34. The sequence is that of tRNA 5-methylaminomethyl-2-thiouridine biosynthesis bifunctional protein MnmC from Aeromonas salmonicida (strain A449).